The following is a 393-amino-acid chain: Probable chromate transport protein (393 aa).

10 helical membrane-spanning segments follow: residues 22–42 (YFLKLGALGFGGPIALVGYMH), 90–110 (ALVGLAFVLPSFLIVVALGWA), 119–139 (WMQAVFYGVGAAVIGIIAISA), 146–166 (TVGTSWLLWSIYLVNAATTIV), 201–221 (FIGLPLIPLFAAVPTATTSLL), 231–251 (AGAFVFGSGLAIVPFLYGGVV), 261–281 (QFLDAVAVAMITPGPVVITTG), 282–302 (FIGFLVAGFPGACVAAIAMFI), 327–347 (FVNGVTVAATGAIAGAVVVLG), and 370–390 (LGKKLPEPLIIVIAAIAGVIF).

Belongs to the chromate ion transporter (CHR) (TC 2.A.51) family.

It localises to the cell membrane. In terms of biological role, may function in the active transport of chromate into the cell under sulfur-deficient conditions. The protein is Probable chromate transport protein (srpC) of Synechococcus elongatus (strain ATCC 33912 / PCC 7942 / FACHB-805) (Anacystis nidulans R2).